A 531-amino-acid chain; its full sequence is Pescadillo homolog (531 aa).

In terms of domain architecture, BRCT spans 309-398 (SIKTMFKGCV…RKLPTERYMP (90 aa)).

This sequence belongs to the pescadillo family.

It localises to the nucleus. The protein resides in the nucleolus. The protein localises to the nucleoplasm. Functionally, required for maturation of ribosomal RNAs and formation of the large ribosomal subunit. This Caenorhabditis elegans protein is Pescadillo homolog.